The following is a 125-amino-acid chain: Type II secretion system protein I (125 aa).

Positions 1 to 5 (MKQQG) are cleaved as a propeptide — leader sequence. Position 6 is an N-methylmethionine (Met-6). A helical membrane pass occupies residues 6 to 26 (MTLLEVMVALVIFALAGLTVL).

It belongs to the GSP I family. As to quaternary structure, type II secretion is composed of four main components: the outer membrane complex, the inner membrane complex, the cytoplasmic secretion ATPase and the periplasm-spanning pseudopilus. Interacts with core component OutG. Post-translationally, cleaved by prepilin peptidase. Methylated by prepilin peptidase at the amino group of the N-terminal methionine once the leader sequence is cleaved by prepilin peptidase.

The protein localises to the cell inner membrane. In terms of biological role, component of the type II secretion system required for the energy-dependent secretion of extracellular factors such as proteases and toxins from the periplasm. Part of the pseudopilus tip complex that is critical for the recognition and binding of secretion substrates. In Dickeya chrysanthemi (Pectobacterium chrysanthemi), this protein is Type II secretion system protein I (outI).